Here is an 81-residue protein sequence, read N- to C-terminus: Acyl carrier protein (81 aa).

The Carrier domain maps to 2–80; it reads ASNEEILAGL…DAVSFIANAQ (79 aa). Residue Ser40 is modified to O-(pantetheine 4'-phosphoryl)serine.

Belongs to the acyl carrier protein (ACP) family. Post-translationally, 4'-phosphopantetheine is transferred from CoA to a specific serine of apo-ACP by AcpS. This modification is essential for activity because fatty acids are bound in thioester linkage to the sulfhydryl of the prosthetic group.

Its subcellular location is the cytoplasm. It functions in the pathway lipid metabolism; fatty acid biosynthesis. Functionally, carrier of the growing fatty acid chain in fatty acid biosynthesis. The polypeptide is Acyl carrier protein (Paenarthrobacter aurescens (strain TC1)).